The primary structure comprises 117 residues: NADH-ubiquinone oxidoreductase chain 3 (117 aa).

3 consecutive transmembrane segments (helical) span residues 3-23 (LLLT…IVSF), 56-76 (FFLV…LLPL), and 85-105 (PMFT…GLIY).

The protein belongs to the complex I subunit 3 family.

It is found in the mitochondrion membrane. It carries out the reaction a ubiquinone + NADH + 5 H(+)(in) = a ubiquinol + NAD(+) + 4 H(+)(out). In terms of biological role, core subunit of the mitochondrial membrane respiratory chain NADH dehydrogenase (Complex I) that is believed to belong to the minimal assembly required for catalysis. Complex I functions in the transfer of electrons from NADH to the respiratory chain. The immediate electron acceptor for the enzyme is believed to be ubiquinone. This chain is NADH-ubiquinone oxidoreductase chain 3 (MT-ND3), found in Tetraodon nigroviridis (Spotted green pufferfish).